Here is a 152-residue protein sequence, read N- to C-terminus: Protein SprT-like (152 aa).

One can recognise a SprT-like domain in the interval 7 to 147 (QRLVEEVSLQ…CGKCKGKLKP (141 aa)). H67 is a binding site for Zn(2+). The active site involves E68. H71 is a binding site for Zn(2+).

It belongs to the SprT family. Zn(2+) serves as cofactor.

It is found in the cytoplasm. This is Protein SprT-like from Bacillus cereus (strain G9842).